Reading from the N-terminus, the 478-residue chain is Crt homolog 3 (478 aa).

The tract at residues 1–30 (MGSDERKPLLSINDGDDDFNHQDVSTKTPP) is disordered. The Cytoplasmic segment spans residues 1-52 (MGSDERKPLLSINDGDDDFNHQDVSTKTPPIKKESLSNKFKSFLKKSMTKET). Residues 53–73 (LPILIYVLLYIISGVINVVLL) traverse the membrane as a helical segment. At 74-83 (KKLMIKFVNY) the chain is on the vacuolar side. Residues 84–104 (GFFLSQITNYGYLPIFLVAMW) form a helical membrane-spanning segment. Residues 105–124 (YKMYCTSDVPKETRNFPQYK) are Cytoplasmic-facing. A helical membrane pass occupies residues 125 to 145 (FVIMGLLDAINGFFVVIGGVS). The Vacuolar segment spans residues 146-149 (TSGP). The helical transmembrane segment at 150–170 (LQQLLNQAIIPFTMIASFIFL) threads the bilayer. At 171-178 (RERYSLFQ) the chain is on the cytoplasmic side. A helical membrane pass occupies residues 179–199 (LGGAAVILGGVIVSLIPSLVG). Residues 200–205 (GSSGGN) are Vacuolar-facing. Residues 206–226 (ILFYNFFYLISVIPGALSNVY) traverse the membrane as a helical segment. The Cytoplasmic segment spans residues 227–237 (KDIAFQSIDMD). Residues 238–258 (VWYLQFWDCLYQSLFGSILFP) traverse the membrane as a helical segment. Topologically, residues 259–322 (VNNWLPPPAT…FVCDDCHNTW (64 aa)) are vacuolar. N-linked (GlcNAc...) asparagine glycosylation occurs at Asn296. The helical transmembrane segment at 323 to 343 (IIVLIYMTVNIAYNIFILLVL) threads the bilayer. Residues 344–352 (KHAGATVYS) lie on the Cytoplasmic side of the membrane. Residues 353 to 373 (IANTVILPLTNIFFSIHFIMG) traverse the membrane as a helical segment. The Vacuolar segment spans residues 374–376 (AAT). Residues 377 to 397 (TPFSALSVAGLLLILFGLGGY) form a helical membrane-spanning segment. Over 398–478 (RIGSMIKKPP…RYRATNIINN (81 aa)) the chain is Cytoplasmic. The tract at residues 404–446 (KKPPPDSKKDSEQQGGEGGAGDGDSSDNKNNLGDSAEIPQQIQ) is disordered. Positions 406 to 415 (PPPDSKKDSE) are enriched in basic and acidic residues.

It belongs to the CRT-like transporter family.

It is found in the vacuole membrane. Nutrient transporter. Involved in maintaining the osmotic homeostasis of the digestive vacuole. This chain is Crt homolog 3 (crtp3), found in Dictyostelium discoideum (Social amoeba).